A 675-amino-acid polypeptide reads, in one-letter code: UvrABC system protein B (675 aa).

Positions 32–417 (EGLSDGLAYQ…EHAGQVVEQV (386 aa)) constitute a Helicase ATP-binding domain. 45–52 (GVTGSGKT) lines the ATP pocket. A Beta-hairpin motif is present at residues 98 to 121 (YYDYYQPEAYVPSRDLFIEKDSAI). One can recognise a Helicase C-terminal domain in the interval 436-602 (QVDDLMSEIN…QIKKQVKDII (167 aa)). The UVR domain maps to 634–669 (IKEIAKLEKAMQQAARDLQFEEAAVLRDRIRNIKEN).

It belongs to the UvrB family. As to quaternary structure, forms a heterotetramer with UvrA during the search for lesions. Interacts with UvrC in an incision complex.

It is found in the cytoplasm. Functionally, the UvrABC repair system catalyzes the recognition and processing of DNA lesions. A damage recognition complex composed of 2 UvrA and 2 UvrB subunits scans DNA for abnormalities. Upon binding of the UvrA(2)B(2) complex to a putative damaged site, the DNA wraps around one UvrB monomer. DNA wrap is dependent on ATP binding by UvrB and probably causes local melting of the DNA helix, facilitating insertion of UvrB beta-hairpin between the DNA strands. Then UvrB probes one DNA strand for the presence of a lesion. If a lesion is found the UvrA subunits dissociate and the UvrB-DNA preincision complex is formed. This complex is subsequently bound by UvrC and the second UvrB is released. If no lesion is found, the DNA wraps around the other UvrB subunit that will check the other stand for damage. In Neisseria meningitidis serogroup A / serotype 4A (strain DSM 15465 / Z2491), this protein is UvrABC system protein B.